Consider the following 489-residue polypeptide: Putative BTB/POZ domain-containing protein R773 (489 aa).

The region spanning 3-73 (SNIELVITDE…GNTSYKFQDK (71 aa)) is the BTB domain.

Belongs to the mimivirus BTB/WD family.

This Acanthamoeba polyphaga (Amoeba) protein is Putative BTB/POZ domain-containing protein R773.